The primary structure comprises 250 residues: Adenosylcobinamide-GDP ribazoletransferase (250 aa).

Transmembrane regions (helical) follow at residues 33 to 53 (IASY…LLYI), 63 to 83 (IVMT…HIDG), 109 to 129 (LGTN…LFLT), 137 to 157 (LTAL…SMMI), 180 to 200 (FAIA…LAVF), and 203 to 223 (ILTI…LRIG).

It belongs to the CobS family. Mg(2+) is required as a cofactor.

It localises to the cell membrane. It carries out the reaction alpha-ribazole + adenosylcob(III)inamide-GDP = adenosylcob(III)alamin + GMP + H(+). The catalysed reaction is alpha-ribazole 5'-phosphate + adenosylcob(III)inamide-GDP = adenosylcob(III)alamin 5'-phosphate + GMP + H(+). It functions in the pathway cofactor biosynthesis; adenosylcobalamin biosynthesis; adenosylcobalamin from cob(II)yrinate a,c-diamide: step 7/7. In terms of biological role, joins adenosylcobinamide-GDP and alpha-ribazole to generate adenosylcobalamin (Ado-cobalamin). Also synthesizes adenosylcobalamin 5'-phosphate from adenosylcobinamide-GDP and alpha-ribazole 5'-phosphate. This is Adenosylcobinamide-GDP ribazoletransferase from Thermoanaerobacter pseudethanolicus (strain ATCC 33223 / 39E) (Clostridium thermohydrosulfuricum).